A 425-amino-acid polypeptide reads, in one-letter code: tRNA (guanine-N(7)-)-methyltransferase non-catalytic subunit wuho (425 aa).

A disordered region spans residues 67 to 102 (ATCAGKEPGGKEQQLTKQPEEGGTTASGSGVTSTSV). Low complexity predominate over residues 88-102 (GGTTASGSGVTSTSV). 5 WD repeats span residues 97–138 (VTST…ARLL), 142–181 (PLAR…APPR), 185–224 (GHLS…DIHS), 228–266 (GHRE…ELLQ), and 325–365 (AGSW…PATS).

The protein belongs to the WD repeat TRM82 family. As to quaternary structure, forms a heterodimer with the catalytic subunit Mettl1. Interacts with mei-P26 and weakly interacts with bgcn; required for the function or formation of the mei-P26-bgcn-bam-sxl complex. Interacts with nanos; may be involved in mei-P26-dependent derepression of the BMP signaling pathway. Interacts with Myc; the interaction may be mediated by mei-P26 and may be involved in the regulation of ribosome biogenesis. In testis, it is present at high level in hub cells, a niche for germline stem cells of testis. Ubiquitously expressed in all testicular cells throughout spermatogenesis. Ubiquitously expressed in all germline and somatic cells of the ovary.

The protein resides in the nucleus. It is found in the cytoplasm. It participates in tRNA modification; N(7)-methylguanine-tRNA biosynthesis. In terms of biological role, required for the Mettl1-dependent formation of N(7)-methylguanine at position 46 (m7G46) in tRNA. In the Mettl1-wuho methyltransferase complex, it is required to stabilize and induce conformational changes of the catalytic subunit. Required for binding of nanos mRNA and repression of translation by the mei-P26-bgcn-bam-sxl complex. May cooperate with mei-P26 and nanos to derepress the BMP signaling pathway. May cooperate with mei-P26 to suppress expression of a subset of microRNAs. May cooperate with mei-P26 to regulate bam expression levels in germline cells during gametogenesis. Required to promote mitosis to meiosis transition during gametogenesis. May regulate germline cell division in part by regulating ribosome biogenesis. The protein is tRNA (guanine-N(7)-)-methyltransferase non-catalytic subunit wuho of Drosophila yakuba (Fruit fly).